Consider the following 382-residue polypeptide: MQNRPLTIGLVAGETSGDILGAGLIRALKAQIPDARFVGVAGPLMQAEGCETWYEMEELAVMGVVEVLERLPRLLKIRKDLTRRFSDLAPDVFVGIDAPDFNITLEGRLKQRGIRTIHYVSPSVWAWRQKRVFKIGKATDLVLAFLPFEKAFYDRFNVPCRFIGHTMADAMPLQPDKLAARAKLGIAADARCLALLPGSRGAEVEMLSADFLKTAQLLRTRYPELELVVPLVNAKRREQFERIKAEVAPELRVHLLNGQGREAMIASDAALLASGTAALECMLAKCPMVVGYRMKPFTFWIAQRLVKTPYVSLPNLLAGREIVTELLQHDCVPDKLAASVMPLLEDSPQTDELKQTFLTLHQSIRCGADEQAAQAVLELAKA.

It belongs to the LpxB family.

The enzyme catalyses 2-N,3-O-bis[(3R)-3-hydroxytetradecanoyl]-alpha-D-glucosaminyl 1-phosphate + UDP-2-N,3-O-bis[(3R)-3-hydroxytetradecanoyl]-alpha-D-glucosamine = lipid A disaccharide (E. coli) + UDP + H(+). The catalysed reaction is a lipid X + a UDP-2-N,3-O-bis[(3R)-3-hydroxyacyl]-alpha-D-glucosamine = a lipid A disaccharide + UDP + H(+). Its pathway is glycolipid biosynthesis; lipid IV(A) biosynthesis; lipid IV(A) from (3R)-3-hydroxytetradecanoyl-[acyl-carrier-protein] and UDP-N-acetyl-alpha-D-glucosamine: step 5/6. Functionally, condensation of UDP-2,3-diacylglucosamine and 2,3-diacylglucosamine-1-phosphate to form lipid A disaccharide, a precursor of lipid A, a phosphorylated glycolipid that anchors the lipopolysaccharide to the outer membrane of the cell. The sequence is that of Lipid-A-disaccharide synthase from Serratia proteamaculans (strain 568).